A 192-amino-acid chain; its full sequence is GTP cyclohydrolase 1 (192 aa).

Residues Cys76, His79, and Cys148 each contribute to the Zn(2+) site.

It belongs to the GTP cyclohydrolase I family. Toroid-shaped homodecamer, composed of two pentamers of five dimers.

It carries out the reaction GTP + H2O = 7,8-dihydroneopterin 3'-triphosphate + formate + H(+). It functions in the pathway cofactor biosynthesis; 7,8-dihydroneopterin triphosphate biosynthesis; 7,8-dihydroneopterin triphosphate from GTP: step 1/1. This Carboxydothermus hydrogenoformans (strain ATCC BAA-161 / DSM 6008 / Z-2901) protein is GTP cyclohydrolase 1.